Here is a 29-residue protein sequence, read N- to C-terminus: Dermaseptin-J8 (29 aa).

In terms of tissue distribution, expressed by the skin glands.

Its subcellular location is the secreted. In terms of biological role, has antimicrobial activity. This chain is Dermaseptin-J8, found in Phasmahyla jandaia (Jandaia leaf frog).